The following is a 299-amino-acid chain: DNA-binding transcriptional activator HetR (299 aa).

The active site involves S152.

It belongs to the peptidase S48 family. As to quaternary structure, homodimer; disulfide-linked.

Controls heterocyst differentiation. Dimerization is required for DNA-binding. Has both a protease and a DNA-binding activity. Increased expression leads to more heterocysts than usual. This is DNA-binding transcriptional activator HetR from Nostoc punctiforme (strain ATCC 29133 / PCC 73102).